The primary structure comprises 166 residues: Bile acid 7alpha-dehydratase (166 aa).

In terms of assembly, homodimer.

It carries out the reaction 7alpha,12alpha-dihydroxy-3-oxochol-4-en-24-oyl-CoA = 12alpha-hydroxy-3-oxochola-4,6-dien-24-oyl-CoA + H2O. The catalysed reaction is 7alpha-hydroxy-3-oxochol-4-en-24-oyl-CoA = 3-oxochol-4,6-dien-24-oyl-CoA + H2O. The enzyme catalyses 7alpha,12alpha-dihydroxy-3-oxochol-4-en-24-oate = 12alpha-hydroxy-3-oxochola-4,6-dien-24-oate + H2O. It catalyses the reaction 7alpha-hydroxy-3-oxochol-4-en-24-oate = 3-oxochola-4,6-dien-24-oate + H2O. The protein operates within lipid metabolism; bile acid biosynthesis. Functionally, functions in the bile acid 7alpha-dehydroxylation pathway, which forms secondary bile acids via the 7alpha-dehydroxylation of primary bile acids, and is carried out by intestinal anaerobic bacteria. Catalyzes the dehydration step in this pathway, yielding a 3-oxo-Delta(4,6)-bile acid-CoA intermediate. In vitro, can act on the free bile acids (non CoA-conjugated) 7-alpha,12-alpha-dihydroxy-3-oxochol-4-enoate and 7-alpha-hydroxy-3-oxochol-4-enoate, but not on 7-alpha,12-alpha-dihydroxy-3-oxo-5-beta-cholanate, 3-alpha,7-alpha,12-alpha-trihydroxy-5-beta-cholanate or 7-beta-hydroxy-3-oxochol-4-enoate. In Clostridium scindens (strain JCM 10418 / VPI 12708), this protein is Bile acid 7alpha-dehydratase.